Reading from the N-terminus, the 427-residue chain is Putative F-box/FBD/LRR-repeat protein At4g13965 (427 aa).

Residues 13-61 form the F-box domain; sequence ADRISQLPEALIIQILSLLPTEVAVTTSVLSKQWQFLWKMLPKLNFDSL. 6 LRR repeats span residues 67 to 93, 98 to 122, 141 to 168, 169 to 194, 213 to 241, and 258 to 284; these read FKTF…HLIV, CNSM…VLEV, TLEL…HLHY, VDFK…VVHR, LTIY…KIVG, and SMIV…FLEF. The FBD domain maps to 346-396; the sequence is KWNKPKIVPECLLFHLETFMWKGYEWKRNDETEVAKYILSNTNRLKRATFF.

This is Putative F-box/FBD/LRR-repeat protein At4g13965 from Arabidopsis thaliana (Mouse-ear cress).